Consider the following 842-residue polypeptide: Taste receptor type 1 member 1 (842 aa).

The N-terminal stretch at 1–19 (MLFWAAHLLLSLQLAVAYC) is a signal peptide. Residues 20 to 568 (WAFSCQRTES…EFLGWHEPIS (549 aa)) are Extracellular-facing. 7 N-linked (GlcNAc...) asparagine glycosylation sites follow: N88, N89, N96, N136, N292, N480, and N530. The helical transmembrane segment at 569–589 (LVLLAANTLLLLLLIGTAGLF) threads the bilayer. Residues 590–604 (AWRLHTPVVRSAGGR) lie on the Cytoplasmic side of the membrane. A helical membrane pass occupies residues 605–625 (LCFLMLGSLVAGSCSLYSFFG). Over 626 to 640 (KPTVPACLLRQPLFS) the chain is Extracellular. A helical transmembrane segment spans residues 641-661 (LGFAIFLSCLTIRSFQLVIIF). Residues 662 to 681 (KFSTKVPTFYHTWAQNHGAG) are Cytoplasmic-facing. The chain crosses the membrane as a helical span at residues 682 to 702 (IFVIVSSTVHLFLCLTWLAMW). Over 703–725 (TPRPTREYQRFPHLVILECTEVN) the chain is Extracellular. The helical transmembrane segment at 726-746 (SVGFLVAFAHNILLSISTFVC) threads the bilayer. Over 747 to 762 (SYLGKELPENYNEAKC) the chain is Cytoplasmic. A helical transmembrane segment spans residues 763 to 783 (VTFSLLLHFVSWIAFFTMSSI). Topologically, residues 784-789 (YQGSYL) are extracellular. A helical membrane pass occupies residues 790–810 (PAVNVLAGLATLSGGFSGYFL). Residues 811 to 842 (PKCYVILCRPELNNTEHFQASIQDYTRRCGTT) are Cytoplasmic-facing.

Belongs to the G-protein coupled receptor 3 family. TAS1R subfamily. In terms of assembly, forms heterodimers with TAS1R3. Expressed strongly only in fungiform papillae.

It is found in the cell membrane. Its function is as follows. Putative taste receptor. TAS1R1/TAS1R3 responds to the umami taste stimulus (the taste of monosodium glutamate) and also to most of the 20 standard L-amino acids, but not to their D-enantiomers or other compounds. Sequence differences within and between species can significantly influence the selectivity and specificity of taste responses. In Mus musculus (Mouse), this protein is Taste receptor type 1 member 1 (Tas1r1).